Here is a 468-residue protein sequence, read N- to C-terminus: Glutamate--tRNA ligase (468 aa).

A 'HIGH' region motif is present at residues 8–18 (PSPTGFLHVGG). Residues Cys97, Cys99, Cys124, and Asp126 each contribute to the Zn(2+) site. The short motif at 236–240 (KLSKR) is the 'KMSKS' region element. Residue Lys239 participates in ATP binding.

It belongs to the class-I aminoacyl-tRNA synthetase family. Glutamate--tRNA ligase type 1 subfamily. As to quaternary structure, monomer. The cofactor is Zn(2+).

It is found in the cytoplasm. It carries out the reaction tRNA(Glu) + L-glutamate + ATP = L-glutamyl-tRNA(Glu) + AMP + diphosphate. Its function is as follows. Catalyzes the attachment of glutamate to tRNA(Glu) in a two-step reaction: glutamate is first activated by ATP to form Glu-AMP and then transferred to the acceptor end of tRNA(Glu). The chain is Glutamate--tRNA ligase from Francisella tularensis subsp. holarctica (strain FTNF002-00 / FTA).